The sequence spans 81 residues: Putative membrane protein insertion efficiency factor (81 aa).

This sequence belongs to the UPF0161 family.

Its subcellular location is the cell inner membrane. Its function is as follows. Could be involved in insertion of integral membrane proteins into the membrane. This chain is Putative membrane protein insertion efficiency factor, found in Legionella pneumophila (strain Lens).